A 52-amino-acid chain; its full sequence is Large ribosomal subunit protein eL40 (52 aa).

Zn(2+) contacts are provided by Cys20, Cys23, Cys34, and Cys39.

This sequence belongs to the eukaryotic ribosomal protein eL40 family. In terms of assembly, component of the large ribosomal subunit. Mature ribosomes consist of a small (40S) and a large (60S) subunit. The 40S subunit contains about 32 different proteins and 1 molecule of RNA (18S). The 60S subunit contains 45 different proteins and 3 molecules of RNA (25S, 5.8S and 5S). Zn(2+) is required as a cofactor.

It localises to the cytoplasm. In terms of biological role, component of the ribosome, a large ribonucleoprotein complex responsible for the synthesis of proteins in the cell. The small ribosomal subunit (SSU) binds messenger RNAs (mRNAs) and translates the encoded message by selecting cognate aminoacyl-transfer RNA (tRNA) molecules. The large subunit (LSU) contains the ribosomal catalytic site termed the peptidyl transferase center (PTC), which catalyzes the formation of peptide bonds, thereby polymerizing the amino acids delivered by tRNAs into a polypeptide chain. The nascent polypeptides leave the ribosome through a tunnel in the LSU and interact with protein factors that function in enzymatic processing, targeting, and the membrane insertion of nascent chains at the exit of the ribosomal tunnel. The polypeptide is Large ribosomal subunit protein eL40 (Candida albicans (strain SC5314 / ATCC MYA-2876) (Yeast)).